Reading from the N-terminus, the 205-residue chain is Dephospho-CoA kinase (205 aa).

In terms of domain architecture, DPCK spans 4–204; that stretch reads VVGLTGGIAS…QYYLTLATQQ (201 aa). Residue 12–17 participates in ATP binding; it reads ASGKTT.

Belongs to the CoaE family.

It localises to the cytoplasm. It catalyses the reaction 3'-dephospho-CoA + ATP = ADP + CoA + H(+). Its pathway is cofactor biosynthesis; coenzyme A biosynthesis; CoA from (R)-pantothenate: step 5/5. Functionally, catalyzes the phosphorylation of the 3'-hydroxyl group of dephosphocoenzyme A to form coenzyme A. The protein is Dephospho-CoA kinase of Haemophilus ducreyi (strain 35000HP / ATCC 700724).